Reading from the N-terminus, the 99-residue chain is UPF0235 protein AHA_3661 (99 aa).

Belongs to the UPF0235 family.

This Aeromonas hydrophila subsp. hydrophila (strain ATCC 7966 / DSM 30187 / BCRC 13018 / CCUG 14551 / JCM 1027 / KCTC 2358 / NCIMB 9240 / NCTC 8049) protein is UPF0235 protein AHA_3661.